We begin with the raw amino-acid sequence, 201 residues long: MENEEGKREMTKKQSSRFKSICVFCGSSNGNKASYQDAAIDLAKELVMRKIDLVYGGGSIGLMGLVSQAVHDGGRHVIGVIPKLLMLQELTGETVGEVKEVADMHQRKAVMAKHSDAFITLPGGYGTLEELLEVITWAQLGIHDKPVGLLNVDGYYDALLLFIDKAVEEGFILPTARHIIVSAPTARELFIKLEEYVPQHK.

Residues Glu-89, 107–108, 124–130, and Thr-136 contribute to the substrate site; these read RK and GYGTLEE.

Belongs to the LOG family.

It catalyses the reaction N(6)-(dimethylallyl)adenosine 5'-phosphate + H2O = N(6)-dimethylallyladenine + D-ribose 5-phosphate. The catalysed reaction is 9-ribosyl-trans-zeatin 5'-phosphate + H2O = trans-zeatin + D-ribose 5-phosphate. Its function is as follows. Cytokinin-activating enzyme working in the direct activation pathway. Phosphoribohydrolase that converts inactive cytokinin nucleotides to the biologically active free-base forms. The protein is Probable cytokinin riboside 5'-monophosphate phosphoribohydrolase LOG6 (LOG6) of Arabidopsis thaliana (Mouse-ear cress).